We begin with the raw amino-acid sequence, 371 residues long: uncharacterized protein (371 aa).

Positions 339-371 (KVTHEDLVKNRPRSPVRPPIPATAKTPDLPERH) are disordered.

This is an uncharacterized protein from Escherichia coli (strain K12).